Consider the following 171-residue polypeptide: MAELDIQISVEDIGWPGEETLLSFCERVLGAAAVYLRDSEKQPFPTMAPEVSLVFTDDASIQDINAEWRGKDKATNVLSFPAFPVQPGKMPGPMLGDIIIARETLEREAAELEKSFDDHLTHLLVHGFLHLLGYDHMNSAEAEIMEGLETRILAQLGLSDPYEGQDLKMEP.

Zn(2+) contacts are provided by His-126, His-130, and His-136.

The protein belongs to the endoribonuclease YbeY family. Requires Zn(2+) as cofactor.

The protein localises to the cytoplasm. Its function is as follows. Single strand-specific metallo-endoribonuclease involved in late-stage 70S ribosome quality control and in maturation of the 3' terminus of the 16S rRNA. In Rhizobium johnstonii (strain DSM 114642 / LMG 32736 / 3841) (Rhizobium leguminosarum bv. viciae), this protein is Endoribonuclease YbeY.